The following is a 273-amino-acid chain: Shikimate dehydrogenase (NADP(+)) (273 aa).

Shikimate-binding positions include 14–16 and threonine 61; that span reads SKS. The Proton acceptor role is filled by lysine 65. 2 residues coordinate shikimate: asparagine 86 and aspartate 102. Residues 126–130, 150–155, and methionine 213 contribute to the NADP(+) site; these read GAGGA and NRTHAK. Position 215 (tyrosine 215) interacts with shikimate. Glycine 237 serves as a coordination point for NADP(+).

It belongs to the shikimate dehydrogenase family. As to quaternary structure, homodimer.

It carries out the reaction shikimate + NADP(+) = 3-dehydroshikimate + NADPH + H(+). It functions in the pathway metabolic intermediate biosynthesis; chorismate biosynthesis; chorismate from D-erythrose 4-phosphate and phosphoenolpyruvate: step 4/7. Involved in the biosynthesis of the chorismate, which leads to the biosynthesis of aromatic amino acids. Catalyzes the reversible NADPH linked reduction of 3-dehydroshikimate (DHSA) to yield shikimate (SA). This is Shikimate dehydrogenase (NADP(+)) from Aeromonas salmonicida (strain A449).